A 304-amino-acid chain; its full sequence is Acetyl-coenzyme A carboxylase carboxyl transferase subunit beta (304 aa).

The CoA carboxyltransferase N-terminal domain occupies 23 to 292; it reads VWTKCDSCGQ…PNPEAPREGV (270 aa). Zn(2+) is bound by residues cysteine 27, cysteine 30, cysteine 46, and cysteine 49. Residues 27–49 form a C4-type zinc finger; sequence CDSCGQVLYRAELERNLEVCPKC. Residues 284 to 304 are disordered; sequence NPEAPREGVVVPPVPDQEPEA. Over residues 295-304 the composition is skewed to pro residues; it reads PPVPDQEPEA.

This sequence belongs to the AccD/PCCB family. As to quaternary structure, acetyl-CoA carboxylase is a heterohexamer composed of biotin carboxyl carrier protein (AccB), biotin carboxylase (AccC) and two subunits each of ACCase subunit alpha (AccA) and ACCase subunit beta (AccD). It depends on Zn(2+) as a cofactor.

It localises to the cytoplasm. The enzyme catalyses N(6)-carboxybiotinyl-L-lysyl-[protein] + acetyl-CoA = N(6)-biotinyl-L-lysyl-[protein] + malonyl-CoA. It functions in the pathway lipid metabolism; malonyl-CoA biosynthesis; malonyl-CoA from acetyl-CoA: step 1/1. Component of the acetyl coenzyme A carboxylase (ACC) complex. Biotin carboxylase (BC) catalyzes the carboxylation of biotin on its carrier protein (BCCP) and then the CO(2) group is transferred by the transcarboxylase to acetyl-CoA to form malonyl-CoA. The polypeptide is Acetyl-coenzyme A carboxylase carboxyl transferase subunit beta (Shigella boydii serotype 18 (strain CDC 3083-94 / BS512)).